The primary structure comprises 227 residues: uncharacterized protein (227 aa).

Residues I7–L26 traverse the membrane as a helical segment.

Its subcellular location is the membrane. This is an uncharacterized protein from Haemophilus influenzae (strain ATCC 51907 / DSM 11121 / KW20 / Rd).